Here is a 335-residue protein sequence, read N- to C-terminus: Dihydroorotate dehydrogenase (quinone) (335 aa).

Residues 59-63 (AGLDK) and Thr83 each bind FMN. Lys63 lines the substrate pocket. 108–112 (NRMGF) is a substrate binding site. FMN is bound by residues Asn136 and Asn169. Substrate is bound at residue Asn169. Ser172 serves as the catalytic Nucleophile. Residue Asn174 coordinates substrate. FMN is bound by residues Lys214 and Thr242. 243-244 (NT) serves as a coordination point for substrate. FMN-binding positions include Gly265, Gly294, and 315–316 (YS).

It belongs to the dihydroorotate dehydrogenase family. Type 2 subfamily. Monomer. It depends on FMN as a cofactor.

The protein resides in the cell membrane. It catalyses the reaction (S)-dihydroorotate + a quinone = orotate + a quinol. It functions in the pathway pyrimidine metabolism; UMP biosynthesis via de novo pathway; orotate from (S)-dihydroorotate (quinone route): step 1/1. Catalyzes the conversion of dihydroorotate to orotate with quinone as electron acceptor. The protein is Dihydroorotate dehydrogenase (quinone) of Neisseria meningitidis serogroup B (strain ATCC BAA-335 / MC58).